A 146-amino-acid chain; its full sequence is Large ribosomal subunit protein uL15 (146 aa).

A compositionally biased stretch (basic and acidic residues) spans 1-13 (MKLHELKPAEGSR). Positions 1 to 52 (MKLHELKPAEGSRKVRNRVGRGIGSGNGKTAGKGHKGQNARSGGGVRLGFEG) are disordered. Composition is skewed to gly residues over residues 21–31 (RGIGSGNGKTA) and 42–52 (SGGGVRLGFEG).

This sequence belongs to the universal ribosomal protein uL15 family. In terms of assembly, part of the 50S ribosomal subunit.

Functionally, binds to the 23S rRNA. This chain is Large ribosomal subunit protein uL15, found in Bacillus anthracis (strain A0248).